The chain runs to 82 residues: uncharacterized protein (82 aa).

Helical transmembrane passes span 8-28 (LLSA…LPAP) and 50-70 (LYTV…YLVL).

The protein localises to the cell membrane. This is an uncharacterized protein from Klebsiella pneumoniae.